We begin with the raw amino-acid sequence, 344 residues long: Phosphate acyltransferase (344 aa).

Belongs to the PlsX family. As to quaternary structure, homodimer. Probably interacts with PlsY.

Its subcellular location is the cytoplasm. It carries out the reaction a fatty acyl-[ACP] + phosphate = an acyl phosphate + holo-[ACP]. Its pathway is lipid metabolism; phospholipid metabolism. Its function is as follows. Catalyzes the reversible formation of acyl-phosphate (acyl-PO(4)) from acyl-[acyl-carrier-protein] (acyl-ACP). This enzyme utilizes acyl-ACP as fatty acyl donor, but not acyl-CoA. This is Phosphate acyltransferase from Acaryochloris marina (strain MBIC 11017).